The sequence spans 325 residues: Lactonase drp35 (325 aa).

Residues Glu-46, Thr-108, Gly-110, Asp-128, Thr-131, Tyr-133, Asp-136, Asn-183, Asp-234, and Ser-235 each contribute to the Ca(2+) site. Asp-234 serves as the catalytic Proton donor.

Belongs to the SMP-30/CGR1 family. Ca(2+) serves as cofactor.

The protein resides in the cytoplasm. Its function is as follows. Exhibits lactonase activity. Acts in cells with perturbed membrane integrity and is possibly related to the membrane homeostasis. In Staphylococcus epidermidis (strain ATCC 35984 / DSM 28319 / BCRC 17069 / CCUG 31568 / BM 3577 / RP62A), this protein is Lactonase drp35 (drp35).